The primary structure comprises 601 residues: Glutamine--fructose-6-phosphate aminotransferase [isomerizing] (601 aa).

Residue Cys-2 is the Nucleophile; for GATase activity of the active site. The Glutamine amidotransferase type-2 domain occupies 2-218; the sequence is CGIVGYIGYD…DHEIVIVKKD (217 aa). SIS domains are found at residues 284–423 and 453–591; these read IIND…EHGR and IATD…VDKP. Catalysis depends on Lys-596, which acts as the For Fru-6P isomerization activity.

In terms of assembly, homodimer.

Its subcellular location is the cytoplasm. It carries out the reaction D-fructose 6-phosphate + L-glutamine = D-glucosamine 6-phosphate + L-glutamate. Catalyzes the first step in hexosamine metabolism, converting fructose-6P into glucosamine-6P using glutamine as a nitrogen source. This chain is Glutamine--fructose-6-phosphate aminotransferase [isomerizing], found in Staphylococcus aureus (strain MRSA252).